The sequence spans 61 residues: Sperm protamine P1 (61 aa).

Residues 1–61 (MARFRRSRSR…RSSRRSRRRN (61 aa)) are disordered.

It belongs to the protamine P1 family. Testis.

The protein localises to the nucleus. The protein resides in the chromosome. Protamines substitute for histones in the chromatin of sperm during the haploid phase of spermatogenesis. They compact sperm DNA into a highly condensed, stable and inactive complex. This chain is Sperm protamine P1 (PRM1), found in Ornithorhynchus anatinus (Duckbill platypus).